Consider the following 429-residue polypeptide: Glutamate-1-semialdehyde 2,1-aminomutase (429 aa).

Lysine 267 is subject to N6-(pyridoxal phosphate)lysine.

It belongs to the class-III pyridoxal-phosphate-dependent aminotransferase family. HemL subfamily. As to quaternary structure, homodimer. Requires pyridoxal 5'-phosphate as cofactor.

Its subcellular location is the cytoplasm. It catalyses the reaction (S)-4-amino-5-oxopentanoate = 5-aminolevulinate. Its pathway is porphyrin-containing compound metabolism; protoporphyrin-IX biosynthesis; 5-aminolevulinate from L-glutamyl-tRNA(Glu): step 2/2. The polypeptide is Glutamate-1-semialdehyde 2,1-aminomutase (Xanthomonas oryzae pv. oryzae (strain PXO99A)).